Reading from the N-terminus, the 301-residue chain is GTPase Era (301 aa).

Residues 8-174 form the Era-type G domain; sequence KSGFVALVGR…LKTLKDYLPE (167 aa). The G1 stretch occupies residues 16–23; sequence GRPNVGKS. 16–23 lines the GTP pocket; it reads GRPNVGKS. Residues 42–46 form a G2 region; sequence QTTRN. The G3 stretch occupies residues 63–66; it reads DTPG. GTP is bound by residues 63-67 and 124-127; these read DTPGI and NKID. Positions 124–127 are G4; the sequence is NKID. The segment at 153 to 155 is G5; sequence ISA. The KH type-2 domain maps to 197–282; it reads IREQILRLTD…NLKLWVKVRR (86 aa).

It belongs to the TRAFAC class TrmE-Era-EngA-EngB-Septin-like GTPase superfamily. Era GTPase family. Monomer.

The protein resides in the cytoplasm. It localises to the cell membrane. An essential GTPase that binds both GDP and GTP, with rapid nucleotide exchange. Plays a role in 16S rRNA processing and 30S ribosomal subunit biogenesis and possibly also in cell cycle regulation and energy metabolism. In Lactobacillus delbrueckii subsp. bulgaricus (strain ATCC 11842 / DSM 20081 / BCRC 10696 / JCM 1002 / NBRC 13953 / NCIMB 11778 / NCTC 12712 / WDCM 00102 / Lb 14), this protein is GTPase Era.